The sequence spans 715 residues: Fatty acid oxidation complex subunit alpha (715 aa).

The segment at 8–197 is enoyl-CoA hydratase; it reads NSQPSAFSLT…NLGLVEEAVP (190 aa). The tract at residues 313-715 is 3-hydroxyacyl-CoA dehydrogenase; sequence ATIKKVGVLG…MANEEQSFYS (403 aa).

The protein in the N-terminal section; belongs to the enoyl-CoA hydratase/isomerase family. This sequence in the central section; belongs to the 3-hydroxyacyl-CoA dehydrogenase family. In terms of assembly, heterotetramer of two alpha chains (FadJ) and two beta chains (FadI).

It is found in the cytoplasm. It carries out the reaction a (3S)-3-hydroxyacyl-CoA = a (2E)-enoyl-CoA + H2O. The catalysed reaction is a 4-saturated-(3S)-3-hydroxyacyl-CoA = a (3E)-enoyl-CoA + H2O. It catalyses the reaction a (3S)-3-hydroxyacyl-CoA + NAD(+) = a 3-oxoacyl-CoA + NADH + H(+). The enzyme catalyses (3S)-3-hydroxybutanoyl-CoA = (3R)-3-hydroxybutanoyl-CoA. It participates in lipid metabolism; fatty acid beta-oxidation. In terms of biological role, catalyzes the formation of a hydroxyacyl-CoA by addition of water on enoyl-CoA. Also exhibits 3-hydroxyacyl-CoA epimerase and 3-hydroxyacyl-CoA dehydrogenase activities. The polypeptide is Fatty acid oxidation complex subunit alpha (Photobacterium profundum (strain SS9)).